Here is a 51-residue protein sequence, read N- to C-terminus: Large ribosomal subunit protein bL33 (51 aa).

This sequence belongs to the bacterial ribosomal protein bL33 family.

The protein is Large ribosomal subunit protein bL33 of Alteromonas mediterranea (strain DSM 17117 / CIP 110805 / LMG 28347 / Deep ecotype).